The primary structure comprises 153 residues: UPF0178 protein Atu1478 (153 aa).

Belongs to the UPF0178 family.

This chain is UPF0178 protein Atu1478, found in Agrobacterium fabrum (strain C58 / ATCC 33970) (Agrobacterium tumefaciens (strain C58)).